The primary structure comprises 156 residues: MDINASLIVQMLVFVVFIGLTMKFIWPPLTKALEARRKNIADGLAAAEEGRKELELAEIKSKEQLTEAKTQAAHIIEQANQRANHIVEEAKNKAREEGAHLIQLAKNEIEQEYNAAKTELLKQISTIAVAGAQKILQREVDKASNDRLVDELVSEI.

Residues 7–27 form a helical membrane-spanning segment; that stretch reads LIVQMLVFVVFIGLTMKFIWP.

It belongs to the ATPase B chain family. As to quaternary structure, F-type ATPases have 2 components, F(1) - the catalytic core - and F(0) - the membrane proton channel. F(1) has five subunits: alpha(3), beta(3), gamma(1), delta(1), epsilon(1). F(0) has three main subunits: a(1), b(2) and c(10-14). The alpha and beta chains form an alternating ring which encloses part of the gamma chain. F(1) is attached to F(0) by a central stalk formed by the gamma and epsilon chains, while a peripheral stalk is formed by the delta and b chains.

The protein resides in the cell inner membrane. Functionally, f(1)F(0) ATP synthase produces ATP from ADP in the presence of a proton or sodium gradient. F-type ATPases consist of two structural domains, F(1) containing the extramembraneous catalytic core and F(0) containing the membrane proton channel, linked together by a central stalk and a peripheral stalk. During catalysis, ATP synthesis in the catalytic domain of F(1) is coupled via a rotary mechanism of the central stalk subunits to proton translocation. In terms of biological role, component of the F(0) channel, it forms part of the peripheral stalk, linking F(1) to F(0). The polypeptide is ATP synthase subunit b (Coxiella burnetii (strain CbuK_Q154) (Coxiella burnetii (strain Q154))).